We begin with the raw amino-acid sequence, 329 residues long: Cytosolic arginine sensor for mTORC1 subunit 1 (329 aa).

S14 is subject to Phosphoserine. 2 ACT domains span residues 72–138 and 260–321; these read AEAT…HTLA and GELW…EVLQ. L-arginine is bound by residues 111–112, G274, 280–281, and 300–304; these read SV, IV, and TFNFD.

The protein belongs to the GATS family. Forms homodimers and heterodimers with CASTOR2. Interacts with the GATOR2 complex which is composed of MIOS, SEC13, SEH1L, WDR24 and WDR59; the interaction is negatively regulated by arginine. Interacts with TM4SF5; the interaction is positively regulated by leucine and is negatively regulated by arginine. Phosphorylation at Ser-14 by AKT1, promoting the interaction between CASTOR1 and RNF167. In terms of processing, ubiquitinated by RNF167 via 'Lys-29'-polyubiquitination, leading to its degradation, releasing the GATOR2 complex. Ubiquitination by RNF167 is promoted by phosphorylation at Ser-14 by AKT1.

Its subcellular location is the cytoplasm. The protein resides in the cytosol. Its function is as follows. Functions as an intracellular arginine sensor within the amino acid-sensing branch of the TORC1 signaling pathway. As a homodimer or a heterodimer with CASTOR2, binds and inhibits the GATOR subcomplex GATOR2 and thereby mTORC1. Binding of arginine to CASTOR1 allosterically disrupts the interaction of CASTOR1-containing dimers with GATOR2 which can in turn activate mTORC1 and the TORC1 signaling pathway. The chain is Cytosolic arginine sensor for mTORC1 subunit 1 from Pongo abelii (Sumatran orangutan).